Consider the following 228-residue polypeptide: Ribulose-phosphate 3-epimerase (228 aa).

S9 contributes to the substrate binding site. Positions 34, 36, and 70 each coordinate a divalent metal cation. D36 functions as the Proton acceptor in the catalytic mechanism. Residues H70, 146–149 (GFPG), 179–181 (DGG), and 201–202 (GS) each bind substrate. Residue D179 coordinates a divalent metal cation. The active-site Proton donor is the D179.

Belongs to the ribulose-phosphate 3-epimerase family. The cofactor is a divalent metal cation.

It catalyses the reaction D-ribulose 5-phosphate = D-xylulose 5-phosphate. The protein operates within carbohydrate degradation. Its function is as follows. Catalyzes the reversible epimerization of D-ribulose 5-phosphate to D-xylulose 5-phosphate. This Buchnera aphidicola subsp. Baizongia pistaciae (strain Bp) protein is Ribulose-phosphate 3-epimerase.